The chain runs to 336 residues: Probable allantoicase 2 (336 aa).

It belongs to the allantoicase family.

It catalyses the reaction allantoate + H2O = (S)-ureidoglycolate + urea. It functions in the pathway nitrogen metabolism; (S)-allantoin degradation; (S)-ureidoglycolate from allantoate (aminidohydrolase route): step 1/1. In Burkholderia pseudomallei (strain K96243), this protein is Probable allantoicase 2.